Consider the following 61-residue polypeptide: DNA-binding protein 7a (61 aa).

The interval 37–61 (NGKTGRGAVSEKDAPKELLEKLEKK) is disordered. A compositionally biased stretch (basic and acidic residues) spans 45-61 (VSEKDAPKELLEKLEKK).

The protein belongs to the 7 kDa DNA-binding/endoribonuclease P2 family. Monomer.

It localises to the cytoplasm. Functionally, can constrain negative DNA supercoils. May be involved in maintaining the integrity of the genome at high temperature. In Acidianus hospitalis (strain W1), this protein is DNA-binding protein 7a.